Here is a 1007-residue protein sequence, read N- to C-terminus: Glutamate receptor ionotropic, delta-2 (1007 aa).

An N-terminal signal peptide occupies residues 1–23 (MEVFPFLLVLSVWWSRTWDSANA). Residues 24–345 (DSIIHIGAIF…NAFHKKLEDR (322 aa)) are interaction with CBLN1 homotrimer. The Extracellular segment spans residues 24-566 (DSIIHIGAIF…DMFACLAPFD (543 aa)). Intrachain disulfides connect cysteine 83/cysteine 355, cysteine 99/cysteine 131, and cysteine 298/cysteine 310. The N-linked (GlcNAc...) asparagine glycan is linked to asparagine 293. An N-linked (GlcNAc...) asparagine glycan is attached at asparagine 426. Glutamate 531, valine 534, and aspartate 535 together coordinate Ca(2+). Residues 567-587 (LSLWACIAGTVLLVGLLVYLL) traverse the membrane as a helical segment. The Cytoplasmic portion of the chain corresponds to 588-635 (NWLNPPRLQMGSMTSTTLYNSMWFVYGSFVQQGGEVPYTTLATRMMMG). A helical transmembrane segment spans residues 636–656 (AWWLFALIVISSYTANLAAFL). Residues 657-830 (TITRIESSIQ…QKGGALDIKS (174 aa)) lie on the Extracellular side of the membrane. Residues asparagine 713 and asparagine 716 are each glycosylated (N-linked (GlcNAc...) asparagine). Ca(2+) contacts are provided by aspartate 753, aspartate 755, and serine 757. Residues 831–851 (FAGVFCILAAGIVLSCFIAML) form a helical membrane-spanning segment. The Cytoplasmic portion of the chain corresponds to 852–1007 (ETWWNKRKGS…GNDPDRGTSI (156 aa)). Serine 883 is modified (phosphoserine). The residue at position 886 (threonine 886) is a Phosphothreonine. A Phosphoserine modification is found at serine 890. The tract at residues 921–991 (DFRNTHITTT…MSSIPYQPTP (71 aa)) is interaction with AP4M1. Positions 1005–1007 (TSI) match the PDZ-binding motif. The residue at position 1006 (serine 1006) is a Phosphoserine.

This sequence belongs to the glutamate-gated ion channel (TC 1.A.10.1) family. GRID2 subfamily. In terms of assembly, tetramer; dimer of dimers. Interacts with EML2, MAGI2 (via PDZ domains) and AP4M1. Interacts with BECN1, GOPC, GRID2IP, SHANK1 and SHANK2. Interacts with CBLN2, but not with CBLN4. Interacts with CBLN1 (via C1q domain); the interaction is CBLN1-NRX1 complex formation-dependent; CBLN1-binding is calcium-independent; CBLN1 hexamers anchor GRID2 N-terminal domain dimers to monomeric NRXN1 isoform beta; promotes synaptogenesis and mediates the D-Serine-dependent long term depression signals and AMPA receptor endocytosis.

Its subcellular location is the postsynaptic cell membrane. It catalyses the reaction Ca(2+)(in) = Ca(2+)(out). The catalysed reaction is Na(+)(in) = Na(+)(out). In terms of biological role, member of the ionotropic glutamate receptor family, which plays a crucial role in synaptic organization and signal transduction in the central nervous system. Although it shares structural features with ionotropic glutamate receptors, does not bind glutamate as a primary ligand. Promotes synaptogenesis and mediates the D-Serine-dependent long term depression signals and AMPA receptor endocytosis of cerebellar parallel fiber-Purkinje cell (PF-PC) synapses through the NRX1B-CBLN1-GRID2 triad complex. In the presence of neurexins and cerebellins, forms cation-selective channels that are proposed to be gated by glycine and D-serine. However, recent research disputes this ligand-gated cation channel activity. Cation-selective ion channel activity can be triggered by GRM1 in Purkinje cells. The chain is Glutamate receptor ionotropic, delta-2 (GRID2) from Homo sapiens (Human).